The chain runs to 400 residues: MIIKPRIRGFICTTTHPVGCEQNVKEQIALTKAQGPIANAPKRVLVVGSSSGYGLSSRITAAFGGGASTIGVFFEKAGTEKKPGTAGWYNSAAFDKFAKEEGLYSKSLNGDAFSNEAKQKTIDLIKEDLGQIDMVVYSLASPVRKMPETGEVIRSSLKPIGETYTATAVDTNKDAIIEASVEPATEQEIKDTVTVMGGEDWELWINALSEAGVLADGCKTVAYSYIGTELTWPIYWDGALGQAKMDLDRAATALNEKLSTTGGTANVAVLKSVVTQASSAIPVMPLYIAMVFKKMREEGVHEGCQEQILRMFSQRLYKADGSAAEVDEKNRLRLDDWELREDIQQHCRDLWPQVTTENLKDLTDYVEYKEEFLKLFGFGVDGVDYDADVNPEVNFDVADI.

NAD(+)-binding positions include 48–53, 74–75, 111–112, and 139–140; these read GSSSGY, FE, DA, and LA. Y225 lines the substrate pocket. The active-site Proton donor is the Y235. NAD(+) is bound by residues K244 and 273–275; that span reads VVT.

Belongs to the TER reductase family. In terms of assembly, monomer.

It carries out the reaction a 2,3-saturated acyl-[ACP] + NAD(+) = a (2E)-enoyl-[ACP] + NADH + H(+). It functions in the pathway lipid metabolism; fatty acid biosynthesis. Functionally, involved in the final reduction of the elongation cycle of fatty acid synthesis (FAS II). Catalyzes the reduction of a carbon-carbon double bond in an enoyl moiety that is covalently linked to an acyl carrier protein (ACP). The chain is Enoyl-[acyl-carrier-protein] reductase [NADH] from Aliivibrio fischeri (strain MJ11) (Vibrio fischeri).